A 66-amino-acid polypeptide reads, in one-letter code: Large ribosomal subunit protein bL35 (66 aa).

It belongs to the bacterial ribosomal protein bL35 family.

In Acholeplasma laidlawii (strain PG-8A), this protein is Large ribosomal subunit protein bL35.